Reading from the N-terminus, the 243-residue chain is Carboxy-S-adenosyl-L-methionine synthase (243 aa).

S-adenosyl-L-methionine is bound by residues Tyr40, 65 to 67, 90 to 91, 118 to 119, Asn133, and Arg200; these read GCS, DN, and DI.

It belongs to the class I-like SAM-binding methyltransferase superfamily. Cx-SAM synthase family. In terms of assembly, homodimer.

The enzyme catalyses prephenate + S-adenosyl-L-methionine = carboxy-S-adenosyl-L-methionine + 3-phenylpyruvate + H2O. Its function is as follows. Catalyzes the conversion of S-adenosyl-L-methionine (SAM) to carboxy-S-adenosyl-L-methionine (Cx-SAM). This chain is Carboxy-S-adenosyl-L-methionine synthase, found in Shewanella woodyi (strain ATCC 51908 / MS32).